Reading from the N-terminus, the 70-residue chain is Guanine nucleotide-binding protein subunit gamma-1 (70 aa).

Cys67 carries the cysteine methyl ester modification. Cys67 carries S-geranylgeranyl cysteine lipidation. The propeptide at 68–70 (TVL) is removed in mature form.

The protein belongs to the G protein gamma family. G proteins are composed of 3 units, alpha, beta and gamma. In terms of tissue distribution, predominantly expressed in the central nervous system.

The protein resides in the cell membrane. Functionally, guanine nucleotide-binding proteins (G proteins) are involved as a modulator or transducer in various transmembrane signaling systems. The beta and gamma chains are required for the GTPase activity, for replacement of GDP by GTP, and for G protein-effector interaction. This Drosophila melanogaster (Fruit fly) protein is Guanine nucleotide-binding protein subunit gamma-1 (Ggamma1).